The sequence spans 25 residues: Ribosome-inactivating protein velutin (25 aa).

The segment at 1-25 (XHPDLFXXRPDNTASPKFEDPRLNP) is disordered.

Belongs to the ribosome-inactivating protein family.

It catalyses the reaction Endohydrolysis of the N-glycosidic bond at one specific adenosine on the 28S rRNA.. Functionally, inhibits protein synthesis but does not possess ribonuclease activity. Also inhibits HIV-1 reverse transcriptase, beta-glucosidase and beta-glucuronidase. The protein is Ribosome-inactivating protein velutin of Flammulina velutipes (Agaricus velutipes).